The primary structure comprises 99 residues: Small ribosomal subunit protein bS20 (99 aa).

The segment covering 1 to 20 (MASAKPKKKNPRLASGRKRV) has biased composition (basic residues). Residues 1–21 (MASAKPKKKNPRLASGRKRVR) form a disordered region.

It belongs to the bacterial ribosomal protein bS20 family.

In terms of biological role, binds directly to 16S ribosomal RNA. This is Small ribosomal subunit protein bS20 from Verminephrobacter eiseniae (strain EF01-2).